The primary structure comprises 362 residues: Methionine import ATP-binding protein MetN (362 aa).

The ABC transporter domain maps to 2–241 (IHIKNLSKTY…PQHDVTRAMV (240 aa)). 38-45 (GPSGAGKS) lines the ATP pocket.

It belongs to the ABC transporter superfamily. Methionine importer (TC 3.A.1.24) family. In terms of assembly, the complex is composed of two ATP-binding proteins (MetN), two transmembrane proteins (MetI) and a solute-binding protein (MetQ).

Its subcellular location is the cell inner membrane. It catalyses the reaction L-methionine(out) + ATP + H2O = L-methionine(in) + ADP + phosphate + H(+). The catalysed reaction is D-methionine(out) + ATP + H2O = D-methionine(in) + ADP + phosphate + H(+). Its function is as follows. Part of the ABC transporter complex MetNIQ involved in methionine import. Responsible for energy coupling to the transport system. This is Methionine import ATP-binding protein MetN from Bordetella avium (strain 197N).